A 377-amino-acid polypeptide reads, in one-letter code: Pyruvate dehydrogenase E1 component subunit alpha, mitochondrial (377 aa).

The transit peptide at 1-26 (MLSNFLKVNSKALGHIRTFASKSGEI) directs the protein to the mitochondrion. Residues His83, Tyr109, Arg110, Gly156, Val158, Asp187, Gly188, Ala189, Asn216, and Tyr218 each contribute to the pyruvate site. Positions 109, 110, 156, 158, 187, 188, 189, and 216 each coordinate thiamine diphosphate. Position 187 (Asp187) interacts with Mg(2+). The Mg(2+) site is built by Asn216 and Tyr218. His283 contributes to the thiamine diphosphate binding site.

Tetramer of 2 alpha and 2 beta subunits. Requires thiamine diphosphate as cofactor. Mg(2+) is required as a cofactor.

Its subcellular location is the mitochondrion matrix. The catalysed reaction is N(6)-[(R)-lipoyl]-L-lysyl-[protein] + pyruvate + H(+) = N(6)-[(R)-S(8)-acetyldihydrolipoyl]-L-lysyl-[protein] + CO2. With respect to regulation, E1 activity is regulated by phosphorylation (inactivation) and dephosphorylation (activation) of the alpha subunit. Its function is as follows. The pyruvate dehydrogenase complex catalyzes the overall conversion of pyruvate to acetyl-CoA and CO(2). It contains multiple copies of three enzymatic components: pyruvate dehydrogenase (E1), dihydrolipoamide acetyltransferase (E2) and lipoamide dehydrogenase (E3). The protein is Pyruvate dehydrogenase E1 component subunit alpha, mitochondrial (pdhA) of Dictyostelium discoideum (Social amoeba).